Reading from the N-terminus, the 179-residue chain is ATP synthase subunit delta (179 aa).

The protein belongs to the ATPase delta chain family. As to quaternary structure, F-type ATPases have 2 components, F(1) - the catalytic core - and F(0) - the membrane proton channel. F(1) has five subunits: alpha(3), beta(3), gamma(1), delta(1), epsilon(1). F(0) has three main subunits: a(1), b(2) and c(10-14). The alpha and beta chains form an alternating ring which encloses part of the gamma chain. F(1) is attached to F(0) by a central stalk formed by the gamma and epsilon chains, while a peripheral stalk is formed by the delta and b chains.

The protein resides in the cell inner membrane. F(1)F(0) ATP synthase produces ATP from ADP in the presence of a proton or sodium gradient. F-type ATPases consist of two structural domains, F(1) containing the extramembraneous catalytic core and F(0) containing the membrane proton channel, linked together by a central stalk and a peripheral stalk. During catalysis, ATP synthesis in the catalytic domain of F(1) is coupled via a rotary mechanism of the central stalk subunits to proton translocation. Its function is as follows. This protein is part of the stalk that links CF(0) to CF(1). It either transmits conformational changes from CF(0) to CF(1) or is implicated in proton conduction. This chain is ATP synthase subunit delta, found in Cupriavidus pinatubonensis (strain JMP 134 / LMG 1197) (Cupriavidus necator (strain JMP 134)).